The chain runs to 245 residues: Demethylmenaquinone methyltransferase (245 aa).

S-adenosyl-L-methionine is bound by residues T62, D80, 105 to 106, and S122; that span reads DA.

Belongs to the class I-like SAM-binding methyltransferase superfamily. MenG/UbiE family.

It carries out the reaction a 2-demethylmenaquinol + S-adenosyl-L-methionine = a menaquinol + S-adenosyl-L-homocysteine + H(+). The protein operates within quinol/quinone metabolism; menaquinone biosynthesis; menaquinol from 1,4-dihydroxy-2-naphthoate: step 2/2. Methyltransferase required for the conversion of demethylmenaquinol (DMKH2) to menaquinol (MKH2). In Clavibacter sepedonicus (Clavibacter michiganensis subsp. sepedonicus), this protein is Demethylmenaquinone methyltransferase.